Here is a 206-residue protein sequence, read N- to C-terminus: Large ribosomal subunit protein uL4 (206 aa).

Positions 42 to 94 (RRQQGSHKAQGRGDVSRTGSKMYKQKGTGRARHHSARAPQFRGGGQAHGPVVR) are disordered. Residues 64–77 (YKQKGTGRARHHSA) show a composition bias toward basic residues.

Belongs to the universal ribosomal protein uL4 family. Part of the 50S ribosomal subunit.

Functionally, one of the primary rRNA binding proteins, this protein initially binds near the 5'-end of the 23S rRNA. It is important during the early stages of 50S assembly. It makes multiple contacts with different domains of the 23S rRNA in the assembled 50S subunit and ribosome. In terms of biological role, forms part of the polypeptide exit tunnel. The chain is Large ribosomal subunit protein uL4 from Brucella abortus biovar 1 (strain 9-941).